The following is a 395-amino-acid chain: Phosphoglycerate kinase (395 aa).

Substrate is bound by residues 22-24, arginine 37, 60-63, arginine 116, and arginine 149; these read DLN and HFGR. ATP is bound by residues lysine 199, glutamate 322, and 352-355; that span reads GGDT.

Belongs to the phosphoglycerate kinase family. As to quaternary structure, monomer.

Its subcellular location is the cytoplasm. The catalysed reaction is (2R)-3-phosphoglycerate + ATP = (2R)-3-phospho-glyceroyl phosphate + ADP. It functions in the pathway carbohydrate degradation; glycolysis; pyruvate from D-glyceraldehyde 3-phosphate: step 2/5. This is Phosphoglycerate kinase from Novosphingobium aromaticivorans (strain ATCC 700278 / DSM 12444 / CCUG 56034 / CIP 105152 / NBRC 16084 / F199).